A 460-amino-acid polypeptide reads, in one-letter code: NADH-ubiquinone oxidoreductase chain 4 (460 aa).

13 helical membrane passes run 20–42 (AKWL…LSWL), 61–81 (PLST…VLAS), 94–113 (RTYI…AFGA), 117–139 (IMFY…RWGN), 148–168 (TYFL…LLLL), 195–215 (LWWA…GVHL), 225–245 (PIAG…YGMM), 258–278 (LAYP…SICL), 285–304 (SLIA…GILI), 308–330 (WGFT…LFCL), 351–371 (MILP…LALP), 394–414 (LLLT…LFLM), and 436–456 (LLIT…ELMW).

This sequence belongs to the complex I subunit 4 family.

It is found in the mitochondrion membrane. It catalyses the reaction a ubiquinone + NADH + 5 H(+)(in) = a ubiquinol + NAD(+) + 4 H(+)(out). Its function is as follows. Core subunit of the mitochondrial membrane respiratory chain NADH dehydrogenase (Complex I) that is believed to belong to the minimal assembly required for catalysis. Complex I functions in the transfer of electrons from NADH to the respiratory chain. The immediate electron acceptor for the enzyme is believed to be ubiquinone. This is NADH-ubiquinone oxidoreductase chain 4 (MT-ND4) from Salmo salar (Atlantic salmon).